Consider the following 69-residue polypeptide: A-kinase anchor protein inhibitor 1 (69 aa).

Residues 39–69 form a disordered region; sequence QESLRREGRPGDSRAWGQLGGCELTKKHEKK. Basic and acidic residues predominate over residues 41–50; it reads SLRREGRPGD.

As to quaternary structure, binds cAMP-dependent protein kinase (PKA). Interacts specifically with RII-regulatory subunits of PKA (PRKAR2A and PRKAR2B). Preferentially expressed in the neural tissues.

Protein kinase A (PKA)-binding protein. Binds to type II regulatory subunits of protein kinase A (PKA) and may block the A-kinase anchoring protein (AKAP)-mediated subcellular localization of PKA. This is A-kinase anchor protein inhibitor 1 from Mus musculus (Mouse).